The chain runs to 448 residues: Oxysterol-binding protein homolog 6 (448 aa).

Residues 1-42 form a disordered region; the sequence is MGSKKLTVGSDSHRLSKSSFSSNKSSHSATKDQPIDTDDIDE. Residue serine 16 is modified to Phosphoserine. Low complexity predominate over residues 17–28; sequence KSSFSSNKSSHS. The interval 54 to 391 is OSBP-related domain (ORD); the sequence is IISQLRPGCD…PGEDLDYCIY (338 aa). A 1,2-diacyl-sn-glycero-3-phospho-(1D-myo-inositol 4-phosphate)-binding positions include 64–69, 126–129, and 157–158; these read LTRITL, KPLN, and HH. A 1,2-diacyl-sn-glycero-3-phospho-L-serine is bound by residues 64-69 and asparagine 129; that span reads LTRITL. Residue serine 183 coordinates a 1,2-diacyl-sn-glycero-3-phospho-L-serine. Residues lysine 351, glutamate 355, and arginine 359 each coordinate a 1,2-diacyl-sn-glycero-3-phospho-(1D-myo-inositol 4-phosphate).

It belongs to the OSBP family. Interacts with the AAA ATPase VPS4; regulates OSH6 membrane association. VPS4 is required for membrane dissociation of OSH6.

It is found in the cytoplasm. It localises to the cell membrane. The protein resides in the endoplasmic reticulum membrane. The catalysed reaction is a 1,2-diacyl-sn-glycero-3-phospho-L-serine(in) = a 1,2-diacyl-sn-glycero-3-phospho-L-serine(out). Its function is as follows. Lipid transport protein (LTP) involved in non-vesicular transfer of lipids between membranes. Functions in phosphoinositide-coupled directional transport of various lipids by carrying the lipid molecule in a hydrophobic pocket and transferring it between membranes through the cytosol. Involved in maintenance of intracellular sterol distribution and homeostasis. Catalyzes the lipid countertransport between the endoplasmic reticulum (ER) and the plasma membrane (PM). Specifically exchanges phosphatidylserine (PS) with phosphatidylinositol 4-phosphate (PI4P), delivering phosphatidylserine to the PM in exchange for PI4P, which is delivered to the ER-localized PI4P phosphatase SAC1 for degradation. Thus, by maintaining a PI4P gradient at the ER/PM interface, SAC1 drives PS transport. Binds phosphatidylserine and PI4P in a mutually exclusive manner. Also binds phosphatidic acid (PA). This is Oxysterol-binding protein homolog 6 from Saccharomyces cerevisiae (strain ATCC 204508 / S288c) (Baker's yeast).